A 466-amino-acid polypeptide reads, in one-letter code: Argininosuccinate lyase (466 aa).

The protein belongs to the lyase 1 family. Argininosuccinate lyase subfamily.

It is found in the cytoplasm. It catalyses the reaction 2-(N(omega)-L-arginino)succinate = fumarate + L-arginine. It participates in amino-acid biosynthesis; L-arginine biosynthesis; L-arginine from L-ornithine and carbamoyl phosphate: step 3/3. The sequence is that of Argininosuccinate lyase from Brucella canis (strain ATCC 23365 / NCTC 10854 / RM-666).